The chain runs to 400 residues: tRNA(Met) cytidine acetate ligase (400 aa).

ATP-binding positions include 7-20, Gly-101, Asn-159, and Arg-184; that span reads IVEYNPFHNGHLYH.

The protein belongs to the TmcAL family.

The protein localises to the cytoplasm. The enzyme catalyses cytidine(34) in elongator tRNA(Met) + acetate + ATP = N(4)-acetylcytidine(34) in elongator tRNA(Met) + AMP + diphosphate. Functionally, catalyzes the formation of N(4)-acetylcytidine (ac(4)C) at the wobble position of elongator tRNA(Met), using acetate and ATP as substrates. First activates an acetate ion to form acetyladenylate (Ac-AMP) and then transfers the acetyl group to tRNA to form ac(4)C34. The sequence is that of tRNA(Met) cytidine acetate ligase from Caldicellulosiruptor saccharolyticus (strain ATCC 43494 / DSM 8903 / Tp8T 6331).